The following is a 448-amino-acid chain: Exodeoxyribonuclease 7 large subunit (448 aa).

The protein belongs to the XseA family. In terms of assembly, heterooligomer composed of large and small subunits.

The protein resides in the cytoplasm. It carries out the reaction Exonucleolytic cleavage in either 5'- to 3'- or 3'- to 5'-direction to yield nucleoside 5'-phosphates.. In terms of biological role, bidirectionally degrades single-stranded DNA into large acid-insoluble oligonucleotides, which are then degraded further into small acid-soluble oligonucleotides. This is Exodeoxyribonuclease 7 large subunit from Hamiltonella defensa subsp. Acyrthosiphon pisum (strain 5AT).